The chain runs to 354 residues: Phosphatidylserine decarboxylase proenzyme (354 aa).

The chain crosses the membrane as a helical span at residues 18-36; it reads YLITGVTILSFILMFQYKY. Catalysis depends on charge relay system; for autoendoproteolytic cleavage activity residues Asp139, His198, and Ser308. Catalysis depends on Ser308, which acts as the Schiff-base intermediate with substrate; via pyruvic acid; for decarboxylase activity. A Pyruvic acid (Ser); by autocatalysis modification is found at Ser308.

The protein belongs to the phosphatidylserine decarboxylase family. PSD-B subfamily. Eukaryotic type I sub-subfamily. In terms of assembly, heterodimer of a large membrane-associated beta subunit and a small pyruvoyl-containing alpha subunit. Pyruvate is required as a cofactor. Post-translationally, is synthesized initially as an inactive proenzyme. Formation of the active enzyme involves a self-maturation process in which the active site pyruvoyl group is generated from an internal serine residue via an autocatalytic post-translational modification. Two non-identical subunits are generated from the proenzyme in this reaction, and the pyruvate is formed at the N-terminus of the alpha chain, which is derived from the carboxyl end of the proenzyme. The autoendoproteolytic cleavage occurs by a canonical serine protease mechanism, in which the side chain hydroxyl group of the serine supplies its oxygen atom to form the C-terminus of the beta chain, while the remainder of the serine residue undergoes an oxidative deamination to produce ammonia and the pyruvoyl prosthetic group on the alpha chain. During this reaction, the Ser that is part of the protease active site of the proenzyme becomes the pyruvoyl prosthetic group, which constitutes an essential element of the active site of the mature decarboxylase.

The protein localises to the membrane. The protein resides in the endoplasmic reticulum membrane. The enzyme catalyses a 1,2-diacyl-sn-glycero-3-phospho-L-serine + H(+) = a 1,2-diacyl-sn-glycero-3-phosphoethanolamine + CO2. Its pathway is phospholipid metabolism; phosphatidylethanolamine biosynthesis; phosphatidylethanolamine from CDP-diacylglycerol: step 2/2. Protease activity is inhibited by PMSF. Functionally, catalyzes the formation of phosphatidylethanolamine (PtdEtn) from phosphatidylserine (PtdSer). Plays a central role in phospholipid metabolism and in the interorganelle trafficking of phosphatidylserine. The protein is Phosphatidylserine decarboxylase proenzyme of Plasmodium knowlesi (strain H).